A 77-amino-acid polypeptide reads, in one-letter code: Translation initiation factor IF-1, chloroplastic (77 aa).

The S1-like domain occupies 1–71 (MKEQKWIHEG…TKGRIIYRIR (71 aa)).

The protein belongs to the IF-1 family. Component of the 30S ribosomal translation pre-initiation complex which assembles on the 30S ribosome in the order IF-2 and IF-3, IF-1 and N-formylmethionyl-tRNA(fMet); mRNA recruitment can occur at any time during PIC assembly.

It localises to the plastid. The protein localises to the chloroplast. One of the essential components for the initiation of protein synthesis. Stabilizes the binding of IF-2 and IF-3 on the 30S subunit to which N-formylmethionyl-tRNA(fMet) subsequently binds. Helps modulate mRNA selection, yielding the 30S pre-initiation complex (PIC). Upon addition of the 50S ribosomal subunit IF-1, IF-2 and IF-3 are released leaving the mature 70S translation initiation complex. This chain is Translation initiation factor IF-1, chloroplastic, found in Vitis vinifera (Grape).